The primary structure comprises 421 residues: BEN domain-containing protein 5 (421 aa).

Lys-133 bears the N6-acetyllysine mark. A coiled-coil region spans residues 180–243; that stretch reads RALYEELLRN…LNRRLQDVLL (64 aa). Lys-258 participates in a covalent cross-link: Glycyl lysine isopeptide (Lys-Gly) (interchain with G-Cter in SUMO2). In terms of domain architecture, BEN spans 302 to 408; the sequence is GSGIWVDEEK…EKIMDINKSC (107 aa).

Functionally, acts as a transcriptional repressor. This is BEN domain-containing protein 5 (BEND5) from Homo sapiens (Human).